Here is a 77-residue protein sequence, read N- to C-terminus: uncharacterized protein (77 aa).

Transmembrane regions (helical) follow at residues 3–23 (FNFIEFLGYMATFFVAASFLF) and 35–55 (IGAILFVIYSLIITAYPVALL).

It is found in the cell membrane. This is an uncharacterized protein from Haemophilus influenzae (strain ATCC 51907 / DSM 11121 / KW20 / Rd).